The following is a 757-amino-acid chain: Double zinc ribbon and ankyrin repeat-containing protein 1 (757 aa).

2 DZANK-type zinc fingers span residues cysteine 230–glutamate 290 and cysteine 359–glycine 407. ANK repeat units follow at residues glutamate 631–cysteine 662 and glutamine 666–glutamine 695.

As to quaternary structure, interacts with NINL. Associates with DYNC1H1 and multiple dynein intermediate and light chains as well as actin-binding proteins. As to expression, expressed in retina.

Its subcellular location is the cell projection. The protein localises to the cilium. In terms of biological role, involved in vesicle transport in photoreceptor cells. This Rattus norvegicus (Rat) protein is Double zinc ribbon and ankyrin repeat-containing protein 1.